Consider the following 143-residue polypeptide: Nucleoside diphosphate kinase (143 aa).

Residues Lys-11, Phe-59, Arg-87, Thr-93, Arg-104, and Asn-114 each contribute to the ATP site. The Pros-phosphohistidine intermediate role is filled by His-117.

This sequence belongs to the NDK family. As to quaternary structure, homotetramer. The cofactor is Mg(2+).

The protein resides in the cytoplasm. The catalysed reaction is a 2'-deoxyribonucleoside 5'-diphosphate + ATP = a 2'-deoxyribonucleoside 5'-triphosphate + ADP. The enzyme catalyses a ribonucleoside 5'-diphosphate + ATP = a ribonucleoside 5'-triphosphate + ADP. In terms of biological role, major role in the synthesis of nucleoside triphosphates other than ATP. The ATP gamma phosphate is transferred to the NDP beta phosphate via a ping-pong mechanism, using a phosphorylated active-site intermediate. The sequence is that of Nucleoside diphosphate kinase from Klebsiella pneumoniae (strain 342).